The chain runs to 537 residues: CTP synthase (537 aa).

The segment at Met-1–Leu-267 is amidoligase domain. A CTP-binding site is contributed by Ser-13. Ser-13 contacts UTP. Ser-14 to Ile-19 serves as a coordination point for ATP. Position 54 (Tyr-54) interacts with L-glutamine. Residue Asp-71 participates in ATP binding. Residues Asp-71 and Glu-141 each coordinate Mg(2+). CTP contacts are provided by residues Asp-148–Glu-150, Lys-188–Gln-193, and Lys-224. UTP contacts are provided by residues Lys-188 to Gln-193 and Lys-224. Arg-240 to Val-242 is a binding site for ATP. The Glutamine amidotransferase type-1 domain maps to Glu-292–Asn-534. Gly-354 is a binding site for L-glutamine. The active-site Nucleophile; for glutamine hydrolysis is the Cys-381. L-glutamine contacts are provided by residues Leu-382–Gln-385, Glu-405, and Arg-462. Catalysis depends on residues His-507 and Glu-509.

The protein belongs to the CTP synthase family. Homotetramer.

It catalyses the reaction UTP + L-glutamine + ATP + H2O = CTP + L-glutamate + ADP + phosphate + 2 H(+). The enzyme catalyses L-glutamine + H2O = L-glutamate + NH4(+). The catalysed reaction is UTP + NH4(+) + ATP = CTP + ADP + phosphate + 2 H(+). Its pathway is pyrimidine metabolism; CTP biosynthesis via de novo pathway; CTP from UDP: step 2/2. With respect to regulation, allosterically activated by GTP, when glutamine is the substrate; GTP has no effect on the reaction when ammonia is the substrate. The allosteric effector GTP functions by stabilizing the protein conformation that binds the tetrahedral intermediate(s) formed during glutamine hydrolysis. Inhibited by the product CTP, via allosteric rather than competitive inhibition. Functionally, catalyzes the ATP-dependent amination of UTP to CTP with either L-glutamine or ammonia as the source of nitrogen. Regulates intracellular CTP levels through interactions with the four ribonucleotide triphosphates. This is CTP synthase from Caldanaerobacter subterraneus subsp. tengcongensis (strain DSM 15242 / JCM 11007 / NBRC 100824 / MB4) (Thermoanaerobacter tengcongensis).